The following is an 819-amino-acid chain: Protein EFR3 homolog A (819 aa).

Residues S360, S363, S420, and S692 each carry the phosphoserine modification.

It belongs to the EFR3 family. Component of a phosphatidylinositol 4-kinase (PI4K) complex, composed of PI4KA, EFR3 (EFR3A or EFR3B), TTC7 (TTC7A or TTC7B) and HYCC (HYCC1 or HYCC2). In terms of processing, palmitoylated at its N-terminus, anchoring the protein to the plasma membrane. In terms of tissue distribution, widely expressed. Expressed in neurons of the superior olivary complex of the auditory brainstem. Also expressed at lower levels in the cochlear nucleus, the lateral leminiscal nuclei and the inferior collicus.

The protein localises to the cell membrane. It is found in the cytoplasm. The protein resides in the cytosol. Functionally, component of a complex required to localize phosphatidylinositol 4-kinase (PI4K) to the plasma membrane. The complex acts as a regulator of phosphatidylinositol 4-phosphate (PtdIns(4)P) synthesis. In the complex, EFR3A probably acts as the membrane-anchoring component. Also involved in responsiveness to G-protein-coupled receptors; it is however unclear whether this role is direct or indirect. The sequence is that of Protein EFR3 homolog A from Mus musculus (Mouse).